The sequence spans 379 residues: Heme chaperone HemW (379 aa).

Residues 1–232 enclose the Radical SAM core domain; the sequence is MLQKPNSAYF…MDILAKNGYN (232 aa). Position 9 (tyrosine 9) interacts with S-adenosyl-L-methionine. [4Fe-4S] cluster is bound by residues cysteine 15, cysteine 19, and cysteine 22. S-adenosyl-L-methionine is bound by residues glycine 60, 61-62, glutamate 93, glutamine 120, arginine 132, and aspartate 157; that span reads GT.

The protein belongs to the anaerobic coproporphyrinogen-III oxidase family. HemW subfamily. As to quaternary structure, homodimer.

The protein localises to the cytoplasm. It localises to the cell membrane. Its function is as follows. Could serve in the delivery of heme to a membrane-localized target protein. Binds one molecule of heme per monomer, possibly covalently; heme and Fe-S cluster binding are independent. Incubation with the reductant sodium dithionite increases binding. Does not have coproporphyrinogen III dehydrogenase activity in vitro, does not complement an E.coli hemN deletion in vivo. Binds 1 Fe-S cluster, it is probably [4Fe-4S]. The cluster is coordinated with 3 cysteines and an exchangeable S-adenosyl-L-methionine; only dimeric protein has the cluster. The polypeptide is Heme chaperone HemW (Lactococcus lactis subsp. lactis (strain IL1403) (Streptococcus lactis)).